The chain runs to 55 residues: ATP synthase F(0) complex subunit 8 (55 aa).

Residues 8–24 form a helical membrane-spanning segment; the sequence is PWFMIMLMTWFTYSLLI.

It belongs to the ATPase protein 8 family. Component of the ATP synthase complex composed at least of ATP5F1A/subunit alpha, ATP5F1B/subunit beta, ATP5MC1/subunit c (homooctomer), MT-ATP6/subunit a, MT-ATP8/subunit 8, ATP5ME/subunit e, ATP5MF/subunit f, ATP5MG/subunit g, ATP5MK/subunit k, ATP5MJ/subunit j, ATP5F1C/subunit gamma, ATP5F1D/subunit delta, ATP5F1E/subunit epsilon, ATP5PF/subunit F6, ATP5PB/subunit b, ATP5PD/subunit d, ATP5PO/subunit OSCP. ATP synthase complex consists of a soluble F(1) head domain (subunits alpha(3) and beta(3)) - the catalytic core - and a membrane F(0) domain - the membrane proton channel (subunits c, a, 8, e, f, g, k and j). These two domains are linked by a central stalk (subunits gamma, delta, and epsilon) rotating inside the F1 region and a stationary peripheral stalk (subunits F6, b, d, and OSCP).

The protein resides in the mitochondrion membrane. In terms of biological role, subunit 8, of the mitochondrial membrane ATP synthase complex (F(1)F(0) ATP synthase or Complex V) that produces ATP from ADP in the presence of a proton gradient across the membrane which is generated by electron transport complexes of the respiratory chain. ATP synthase complex consist of a soluble F(1) head domain - the catalytic core - and a membrane F(1) domain - the membrane proton channel. These two domains are linked by a central stalk rotating inside the F(1) region and a stationary peripheral stalk. During catalysis, ATP synthesis in the catalytic domain of F(1) is coupled via a rotary mechanism of the central stalk subunits to proton translocation. In vivo, can only synthesize ATP although its ATP hydrolase activity can be activated artificially in vitro. Part of the complex F(0) domain. The polypeptide is ATP synthase F(0) complex subunit 8 (Coturnix japonica (Japanese quail)).